The chain runs to 374 residues: UDP-N-acetylglucosamine--N-acetylmuramyl-(pentapeptide) pyrophosphoryl-undecaprenol N-acetylglucosamine transferase (374 aa).

UDP-N-acetyl-alpha-D-glucosamine-binding positions include Thr-35–Gly-37, Asn-144, Arg-185, Ser-211, and Gln-305.

This sequence belongs to the glycosyltransferase 28 family. MurG subfamily.

Its subcellular location is the cell inner membrane. It carries out the reaction di-trans,octa-cis-undecaprenyl diphospho-N-acetyl-alpha-D-muramoyl-L-alanyl-D-glutamyl-meso-2,6-diaminopimeloyl-D-alanyl-D-alanine + UDP-N-acetyl-alpha-D-glucosamine = di-trans,octa-cis-undecaprenyl diphospho-[N-acetyl-alpha-D-glucosaminyl-(1-&gt;4)]-N-acetyl-alpha-D-muramoyl-L-alanyl-D-glutamyl-meso-2,6-diaminopimeloyl-D-alanyl-D-alanine + UDP + H(+). The protein operates within cell wall biogenesis; peptidoglycan biosynthesis. Functionally, cell wall formation. Catalyzes the transfer of a GlcNAc subunit on undecaprenyl-pyrophosphoryl-MurNAc-pentapeptide (lipid intermediate I) to form undecaprenyl-pyrophosphoryl-MurNAc-(pentapeptide)GlcNAc (lipid intermediate II). The protein is UDP-N-acetylglucosamine--N-acetylmuramyl-(pentapeptide) pyrophosphoryl-undecaprenol N-acetylglucosamine transferase of Trichodesmium erythraeum (strain IMS101).